The sequence spans 304 residues: Cyclin-dependent kinase 3 (304 aa).

The Protein kinase domain maps to 4–286 (FQKVEKIGEG…AKTALAHPYF (283 aa)). Residues 10-18 (IGEGTYGVV) and Lys33 contribute to the ATP site. Asp127 acts as the Proton acceptor in catalysis.

It belongs to the protein kinase superfamily. CMGC Ser/Thr protein kinase family. CDC2/CDKX subfamily. Interacts with CABLES1 and ATF1. Binding to CCNC/cyclin-C promotes RB1 phosphorylation. Binds to CABLES2.

The enzyme catalyses L-seryl-[protein] + ATP = O-phospho-L-seryl-[protein] + ADP + H(+). The catalysed reaction is L-threonyl-[protein] + ATP = O-phospho-L-threonyl-[protein] + ADP + H(+). Its function is as follows. Serine/threonine-protein kinase that plays a critical role in the control of the eukaryotic cell cycle; involved in G0-G1 and G1-S cell cycle transitions. Interacts with CCNC/cyclin-C during interphase. Phosphorylates histone H1, ATF1, RB1 and CABLES1. ATF1 phosphorylation triggers ATF1 transactivation and transcriptional activities, and promotes cell proliferation and transformation. CDK3/cyclin-C mediated RB1 phosphorylation is required for G0-G1 transition. Promotes G1-S transition probably by contributing to the activation of E2F1, E2F2 and E2F3 in a RB1-independent manner. The chain is Cyclin-dependent kinase 3 (Cdk3) from Mus musculus (Mouse).